A 341-amino-acid chain; its full sequence is Eukaryotic translation initiation factor 3 subunit I (341 aa).

5 WD repeats span residues 8 to 49 (GHER…GTYH), 50 to 91 (GHQG…HTWE), 145 to 184 (CDES…QLHS), 189 to 228 (DMGS…VLKT), and 286 to 325 (GHFG…FDFM).

Belongs to the eIF-3 subunit I family. Component of the eukaryotic translation initiation factor 3 (eIF-3) complex.

The protein resides in the cytoplasm. In terms of biological role, component of the eukaryotic translation initiation factor 3 (eIF-3) complex, which is involved in protein synthesis of a specialized repertoire of mRNAs and, together with other initiation factors, stimulates binding of mRNA and methionyl-tRNAi to the 40S ribosome. The eIF-3 complex specifically targets and initiates translation of a subset of mRNAs involved in cell proliferation. The sequence is that of Eukaryotic translation initiation factor 3 subunit I from Pyricularia oryzae (strain 70-15 / ATCC MYA-4617 / FGSC 8958) (Rice blast fungus).